Consider the following 262-residue polypeptide: 3-deoxy-manno-octulosonate cytidylyltransferase (262 aa).

It belongs to the KdsB family.

The protein localises to the cytoplasm. The catalysed reaction is 3-deoxy-alpha-D-manno-oct-2-ulosonate + CTP = CMP-3-deoxy-beta-D-manno-octulosonate + diphosphate. It participates in nucleotide-sugar biosynthesis; CMP-3-deoxy-D-manno-octulosonate biosynthesis; CMP-3-deoxy-D-manno-octulosonate from 3-deoxy-D-manno-octulosonate and CTP: step 1/1. Its pathway is bacterial outer membrane biogenesis; lipopolysaccharide biosynthesis. Functionally, activates KDO (a required 8-carbon sugar) for incorporation into bacterial lipopolysaccharide in Gram-negative bacteria. The protein is 3-deoxy-manno-octulosonate cytidylyltransferase of Blochmanniella pennsylvanica (strain BPEN).